A 1761-amino-acid polypeptide reads, in one-letter code: 6-methylsalicylic acid synthase AOL_s00215g283 (1761 aa).

The Ketosynthase family 3 (KS3) domain maps to 18–443 (QDDIAIIGMA…GTVAHAVIEQ (426 aa)). Active-site for beta-ketoacyl synthase activity residues include Cys-190, His-325, and His-367. The tract at residues 554–870 (VWVFSGHGAH…ALGKLHCHGA (317 aa)) is malonyl-CoA:ACP transacylase (MAT) domain. The active-site For malonyltransferase activity is the Ser-641. The N-terminal hotdog fold stretch occupies residues 918–1038 (HVLLGAKHQV…GHVANNEWSK (121 aa)). Positions 918–1187 (HVLLGAKHQV…NGMRFSAVEG (270 aa)) are dehydratase (DH) domain. One can recognise a PKS/mFAS DH domain in the interval 918–1191 (HVLLGAKHQV…FSAVEGTPGA (274 aa)). The active-site Proton acceptor; for dehydratase activity is the His-950. A C-terminal hotdog fold region spans residues 1050-1191 (LPSVKPSFAT…FSAVEGTPGA (142 aa)). The active-site Proton donor; for dehydratase activity is the Asp-1113. The tract at residues 1399–1587 (GTYLITGGLG…IVSFLWTSWN (189 aa)) is ketoreductase (KR) domain. The segment at 1654-1680 (PRKRAESSGTEAVSKGEVSEKAPVPKS) is disordered. The 76-residue stretch at 1686-1761 (EYLQNAISEC…HLVKWFEEKI (76 aa)) folds into the Carrier domain. An O-(pantetheine 4'-phosphoryl)serine modification is found at Ser-1721.

The enzyme catalyses 3 malonyl-CoA + acetyl-CoA + NADPH + 3 H(+) = 6-methylsalicylate + 3 CO2 + NADP(+) + 4 CoA + H2O. The protein operates within secondary metabolite biosynthesis; terpenoid biosynthesis. Its function is as follows. 6-methylsalicylic acid synthase; part of the gene cluster that mediates the biosynthesis of sesquiterpenyl epoxy-cyclohexenoids (SECs) such as anthrobotrisins and arthrosporols, metabolites that possess a novel hybrid carbon skeleton consisting of a polyketide-derived epoxycyclohexenol combined with a terpenoid-derived monocyclic sesquiterpenol substructure (PKS-PTS hybrid). The SEC pathway plays an important role for fungal soil colonization via decreasing fungal nematode-capturing ability. Within the pathway, the polyketide synthase (PKS) AOL_s00215g283 catalyzes the biosynthesis of 6-methylsalicylic acid (6-MSA) via condensation of 1 acetate and 3 malonate units. AOL_s00215g283 performs a series of programmed reactions including Claisen condensation, dehydration, reduction, and cyclization to yield 6-MSA. The pathway begins with the biosynthesis of 6-methylsalicylic acid (6-MSA), the first precursor of the polyketide-derived epoxycyclohexenol in arthrosporols, by the polyketide synthase (PKS) AOL_s00215g283. The 6-methylsalicylic acid decarboxylase AOL_s00215g281 then catalyzes the decarboxylation of 6-methylsalicylic acid to yield m-cresol. The cytochrome P450 monooxygenase AOL_s00215g282 further oxidizes m-cresol to yield toluquinol. With the assistance of the oxidoreductase AOL_s00215g277, the polyprenyl transferase AOL_s00215g276 catalyzes the farnesylation of toluquinol to produce farnesyl hydroquinone, the hybrid precursor for biosynthesis of SECs. Farnesyl hydroquinone undergoes epoxidation and then subsequent dehydrogenation to form farnesyl epoxy-quinone, the first and simplest SEC. The cytochrome P450 monooxygenase AOL_s00215g278 and the FAD-dependent monooxygenase AOL_s00215g279 might be involved in the oxygenation of the phenol moiety, most likely in the epoxy formation. The cytochrome P450 monooxygenases AOL_s00215g274 and AOL_s00215g280 are involved in specific regional ketone reductions at respectively C-4 and C-1 of farnesyl epoxy-quinone PubMed:33823587. In Arthrobotrys oligospora (strain ATCC 24927 / CBS 115.81 / DSM 1491) (Nematode-trapping fungus), this protein is 6-methylsalicylic acid synthase AOL_s00215g283.